Consider the following 553-residue polypeptide: Putative transport protein YidE (553 aa).

5 consecutive transmembrane segments (helical) span residues 4-24, 28-48, 65-85, 95-115, and 158-178; these read IALT…IGNI, GVGF…HFVD, FGLI…FFAS, LFAV…HKIF, and MSYA…MWLM. RCK C-terminal domains lie at 192–276 and 279–361; these read KHES…VIGK and DTSL…VVGN. Helical transmembrane passes span 371-391, 403-425, 437-457, 464-484, and 533-553; these read MLPV…PLFV, AGGP…LYWF, LGIV…FVNT, LSWI…VGLL, and LVMF…WGIG.

This sequence belongs to the AAE transporter (TC 2.A.81) family. YidE subfamily.

Its subcellular location is the cell membrane. The polypeptide is Putative transport protein YidE (Salmonella arizonae (strain ATCC BAA-731 / CDC346-86 / RSK2980)).